We begin with the raw amino-acid sequence, 200 residues long: Outer-membrane lipoprotein carrier protein (200 aa).

An N-terminal signal peptide occupies residues M1–A18.

Belongs to the LolA family. In terms of assembly, monomer.

It localises to the periplasm. Participates in the translocation of lipoproteins from the inner membrane to the outer membrane. Only forms a complex with a lipoprotein if the residue after the N-terminal Cys is not an aspartate (The Asp acts as a targeting signal to indicate that the lipoprotein should stay in the inner membrane). The sequence is that of Outer-membrane lipoprotein carrier protein from Idiomarina loihiensis (strain ATCC BAA-735 / DSM 15497 / L2-TR).